Reading from the N-terminus, the 317-residue chain is Serpentine receptor class delta-46 (317 aa).

The next 7 helical transmembrane spans lie at 9–29 (FYII…YVII), 42–62 (IFLC…LLQA), 91–111 (YVLC…TMYV), 129–149 (VIIL…YLTI), 185–205 (QIVF…MFCL), 239–259 (AFLP…ALIT), and 269–289 (FVSV…FYTV).

This sequence belongs to the nematode receptor-like protein srd family.

Its subcellular location is the membrane. This chain is Serpentine receptor class delta-46 (srd-46), found in Caenorhabditis elegans.